We begin with the raw amino-acid sequence, 144 residues long: Granulocyte-macrophage colony-stimulating factor (144 aa).

The signal sequence occupies residues methionine 1–serine 17. Serine 24 carries an O-linked (GalNAc...) serine glycan. O-linked (GalNAc...) threonine glycosylation is present at threonine 27. 2 N-linked (GlcNAc...) asparagine glycosylation sites follow: asparagine 44 and asparagine 54. Disulfide bonds link cysteine 71–cysteine 113 and cysteine 105–cysteine 138.

This sequence belongs to the GM-CSF family. Monomer. The signaling GM-CSF receptor complex is a dodecamer of two head-to-head hexamers of two alpha, two beta, and two ligand subunits.

It is found in the secreted. Cytokine that stimulates the growth and differentiation of hematopoietic precursor cells from various lineages, including granulocytes, macrophages, eosinophils and erythrocytes. In Cervus elaphus (Red deer), this protein is Granulocyte-macrophage colony-stimulating factor (CSF2).